Consider the following 453-residue polypeptide: Putative sodium-coupled neutral amino acid transporter 11 (453 aa).

Positions 1–10 (MSYQQPQLSG) are enriched in polar residues. Positions 1-34 (MSYQQPQLSGPLQRETDSSDRESLISGHEHGGKS) are disordered. The span at 14-32 (RETDSSDRESLISGHEHGG) shows a compositional bias: basic and acidic residues. 11 helical membrane passes run 39 to 59 (AVFN…PYSM), 66 to 86 (LGIL…VLLI), 106 to 126 (GFPG…IAMI), 150 to 170 (GWFI…TLPL), 179 to 199 (LGKI…IVMT), 222 to 242 (AIQA…CFLV), 262 to 282 (ILVS…TFTG), 299 to 319 (VTFG…IECF), 337 to 357 (VFHT…SLMI), 359 to 379 (CLGI…IFII), and 398 to 418 (IMAC…FVMA). N-linked (GlcNAc...) asparagine glycosylation is found at Asn438 and Asn443.

The protein belongs to the amino acid/polyamine transporter 2 family.

It is found in the membrane. Functionally, putative sodium-dependent amino acid/proton antiporter. This chain is Putative sodium-coupled neutral amino acid transporter 11 (Slc38a11), found in Mus musculus (Mouse).